The primary structure comprises 318 residues: B3 domain-containing protein At1g05930 (318 aa).

A DNA-binding region (TF-B3) is located at residues 201 to 293 (FNRLISNDFL…VLCFAMRQWR (93 aa)).

It is found in the nucleus. The chain is B3 domain-containing protein At1g05930 from Arabidopsis thaliana (Mouse-ear cress).